We begin with the raw amino-acid sequence, 300 residues long: Cathepsin B-like CP2 (300 aa).

The N-terminal stretch at 1–19 is a signal peptide; sequence MKLFLLAAAAFSAPALTVS. 3 disulfides stabilise this stretch: Cys-88-Cys-115, Cys-98-Cys-141, and Cys-134-Cys-177. The active site involves Cys-101. Active-site residues include His-245 and Asn-266.

Belongs to the peptidase C1 family.

It is found in the vacuole. Functionally, thiol protease which is required for parasite excystation and invasion of the proximal small intestine of the human host. This Giardia intestinalis (Giardia lamblia) protein is Cathepsin B-like CP2 (CP2).